We begin with the raw amino-acid sequence, 247 residues long: tRNA (guanine-N(1)-)-methyltransferase (247 aa).

S-adenosyl-L-methionine is bound by residues G115 and 134–139; that span reads IGDFVL.

The protein belongs to the RNA methyltransferase TrmD family. In terms of assembly, homodimer.

The protein localises to the cytoplasm. It carries out the reaction guanosine(37) in tRNA + S-adenosyl-L-methionine = N(1)-methylguanosine(37) in tRNA + S-adenosyl-L-homocysteine + H(+). In terms of biological role, specifically methylates guanosine-37 in various tRNAs. This Anaeromyxobacter sp. (strain K) protein is tRNA (guanine-N(1)-)-methyltransferase.